We begin with the raw amino-acid sequence, 38 residues long: Phospholipase A2 2 (38 aa).

Tyr28, Gly30, and Gly32 together coordinate Ca(2+).

It belongs to the phospholipase A2 family. Group I subfamily. It depends on Ca(2+) as a cofactor. Expressed by the venom gland.

It is found in the secreted. It carries out the reaction a 1,2-diacyl-sn-glycero-3-phosphocholine + H2O = a 1-acyl-sn-glycero-3-phosphocholine + a fatty acid + H(+). Functionally, snake venom phospholipase A2 (PLA2) that inhibits neuromuscular transmission by blocking acetylcholine release from the nerve termini. PLA2 catalyzes the calcium-dependent hydrolysis of the 2-acyl groups in 3-sn-phosphoglycerides. The chain is Phospholipase A2 2 from Calliophis bivirgatus (Blue Malaysian coral snake).